Consider the following 572-residue polypeptide: 2-isopropylmalate synthase (572 aa).

Residues 39–313 enclose the Pyruvate carboxyltransferase domain; sequence PVWMSTDLRD…HPGLDFSRIN (275 aa). Residues D48, H252, H254, and N288 each coordinate Mg(2+). The segment at 445–572 is regulatory domain; that stretch reads VAAPYAYVEH…GVGRQVAATR (128 aa).

It belongs to the alpha-IPM synthase/homocitrate synthase family. LeuA type 2 subfamily. Homodimer. The cofactor is Mg(2+).

It is found in the cytoplasm. The enzyme catalyses 3-methyl-2-oxobutanoate + acetyl-CoA + H2O = (2S)-2-isopropylmalate + CoA + H(+). Its pathway is amino-acid biosynthesis; L-leucine biosynthesis; L-leucine from 3-methyl-2-oxobutanoate: step 1/4. Catalyzes the condensation of the acetyl group of acetyl-CoA with 3-methyl-2-oxobutanoate (2-ketoisovalerate) to form 3-carboxy-3-hydroxy-4-methylpentanoate (2-isopropylmalate). This is 2-isopropylmalate synthase from Azoarcus sp. (strain BH72).